The primary structure comprises 375 residues: Queuine tRNA-ribosyltransferase (375 aa).

Aspartate 90 (proton acceptor) is an active-site residue. Residues 90-94 (DSGGF), aspartate 144, glutamine 190, and glycine 217 each bind substrate. Positions 248–254 (GIGTPHY) are RNA binding. Catalysis depends on aspartate 267, which acts as the Nucleophile. Positions 272–276 (TRIAR) are RNA binding; important for wobble base 34 recognition. Zn(2+) is bound by residues cysteine 305, cysteine 307, cysteine 310, and histidine 336.

It belongs to the queuine tRNA-ribosyltransferase family. In terms of assembly, homodimer. Within each dimer, one monomer is responsible for RNA recognition and catalysis, while the other monomer binds to the replacement base PreQ1. Zn(2+) is required as a cofactor.

It catalyses the reaction 7-aminomethyl-7-carbaguanine + guanosine(34) in tRNA = 7-aminomethyl-7-carbaguanosine(34) in tRNA + guanine. It participates in tRNA modification; tRNA-queuosine biosynthesis. Functionally, catalyzes the base-exchange of a guanine (G) residue with the queuine precursor 7-aminomethyl-7-deazaguanine (PreQ1) at position 34 (anticodon wobble position) in tRNAs with GU(N) anticodons (tRNA-Asp, -Asn, -His and -Tyr). Catalysis occurs through a double-displacement mechanism. The nucleophile active site attacks the C1' of nucleotide 34 to detach the guanine base from the RNA, forming a covalent enzyme-RNA intermediate. The proton acceptor active site deprotonates the incoming PreQ1, allowing a nucleophilic attack on the C1' of the ribose to form the product. After dissociation, two additional enzymatic reactions on the tRNA convert PreQ1 to queuine (Q), resulting in the hypermodified nucleoside queuosine (7-(((4,5-cis-dihydroxy-2-cyclopenten-1-yl)amino)methyl)-7-deazaguanosine). This is Queuine tRNA-ribosyltransferase from Borrelia recurrentis (strain A1).